The primary structure comprises 366 residues: Chaperone protein DnaJ (366 aa).

The J domain maps to 5 to 69 (DYYEVLGVSK…QKRAQYDQFG (65 aa)). A CR-type zinc finger spans residues 128–210 (GKELNVEIPV…CHGTGKVRKR (83 aa)). C141, C144, C158, C161, C184, C187, C198, and C201 together coordinate Zn(2+). CXXCXGXG motif repeat units follow at residues 141-148 (CDTCHGSG), 158-165 (CKYCSGTG), 184-191 (CRHCSGTG), and 198-205 (CTTCHGTG).

It belongs to the DnaJ family. Homodimer. It depends on Zn(2+) as a cofactor.

The protein resides in the cytoplasm. Its function is as follows. Participates actively in the response to hyperosmotic and heat shock by preventing the aggregation of stress-denatured proteins and by disaggregating proteins, also in an autonomous, DnaK-independent fashion. Unfolded proteins bind initially to DnaJ; upon interaction with the DnaJ-bound protein, DnaK hydrolyzes its bound ATP, resulting in the formation of a stable complex. GrpE releases ADP from DnaK; ATP binding to DnaK triggers the release of the substrate protein, thus completing the reaction cycle. Several rounds of ATP-dependent interactions between DnaJ, DnaK and GrpE are required for fully efficient folding. Also involved, together with DnaK and GrpE, in the DNA replication of plasmids through activation of initiation proteins. The polypeptide is Chaperone protein DnaJ (Bacillus cytotoxicus (strain DSM 22905 / CIP 110041 / 391-98 / NVH 391-98)).